The sequence spans 216 residues: uncharacterized protein (216 aa).

The next 4 helical transmembrane spans lie at 5–27 (ISLILVIIFPYISLGLSARIAFS), 98–120 (FLSFFFPSVYVLSIIWIAGVFLL), 125–147 (VLIWSGIFNSLLLLFLGILTFTN), and 185–207 (GTLFVAILSFLFGILVLFTGILG).

The protein resides in the cell membrane. This is an uncharacterized protein from Aquifex aeolicus (strain VF5).